A 240-amino-acid chain; its full sequence is Probable septum site-determining protein MinC (240 aa).

This sequence belongs to the MinC family. In terms of assembly, interacts with MinD and FtsZ.

Functionally, cell division inhibitor that blocks the formation of polar Z ring septums. Rapidly oscillates between the poles of the cell to destabilize FtsZ filaments that have formed before they mature into polar Z rings. Prevents FtsZ polymerization. The sequence is that of Probable septum site-determining protein MinC from Acinetobacter baumannii (strain ACICU).